The primary structure comprises 134 residues: ATP synthase epsilon chain (134 aa).

This sequence belongs to the ATPase epsilon chain family. In terms of assembly, F-type ATPases have 2 components, CF(1) - the catalytic core - and CF(0) - the membrane proton channel. CF(1) has five subunits: alpha(3), beta(3), gamma(1), delta(1), epsilon(1). CF(0) has three main subunits: a, b and c.

The protein resides in the cellular thylakoid membrane. Functionally, produces ATP from ADP in the presence of a proton gradient across the membrane. This is ATP synthase epsilon chain from Prochlorococcus marinus (strain MIT 9312).